The chain runs to 944 residues: MFQNNMKQRMNWEDFYGPNLGYALELYDQYAEDPDSIDPDLKDMFDELGAPPSQIKEASGTKEQGRVTADLIQKIAAAVKLAEDIRTYGHLNASVNPLRKDPKKSELFPLSDYGLTEEEMKAIPASVICKDAPANITNGLEAIQHLRNTYKRTISFEFDHVHDFEERAWITKMVESGELFRKNSPEKLSAVLERLTEVEGFEQFLHRTFVGQKRFSIEGLDALVPVLDDIIAQSVKAGTTNVNIGMAHRGRLNVLAHVLGKPYEIIFSEFQHAPNKDLVPSEGSTGISYGWTGDVKYHLGADRQLQDAETKSARITLANNPSHLEFINPIVEGSTRAAQETRTQKGYPVQDETKSLAILIHGDAAFPGEGIVAETLNLSSLKGYQVGGAIHIIANNMIGFTTESDESRSTKYASDLAKGYEIPIVHVNADDPEACLSAVKFAVEYRKRFNKDFLIDLIGYRRYGHNEMDEPSTTQPMLYDAVRKHPTVKRIFAEKLVSEGLISEEKAQNIETAVTKRIEDAYKKVPAKKEDAVREIELPEPVSNGFPDVDTAIDFDVLRKLNGELINWPESFNVFGKLKRILERRAKAFDDDRKVEWSLAESLAFASILKDGTPIRLTGQDSERGTFAQRNLVLHDSETGEEFVALHHLDDCAASFTVHNSPLSEGSVLGFEYGYNVYSPETLVMWEAQYGDFANAAQVYFDQFISAGRAKWGQKSGLVMLLPHGYEGQGPEHSSGRVERFLQLAAENNWTVANLTSAAQYFHILRRQAKMLLREEIRPLVIMTPKSLLRNPNTVSEVQELSESRFKPVYEQSGLSHAYEKVTRVVLSSGKVSIDISDHFNKMEGDKDWLHIARIEQLYPFPAKDTKELFAKLPNLQEIVWVQEEPQNMGAWSYISPYLSEIAPKGVNVQYIGRRRRSSPAEGDPTVHKKEQERIVSDSLTRKN.

The tract at residues 915-944 (RRRSSPAEGDPTVHKKEQERIVSDSLTRKN) is disordered. The span at 925-936 (PTVHKKEQERIV) shows a compositional bias: basic and acidic residues.

Belongs to the alpha-ketoglutarate dehydrogenase family. As to quaternary structure, homodimer. Part of the 2-oxoglutarate dehydrogenase (OGDH) complex composed of E1 (2-oxoglutarate dehydrogenase), E2 (dihydrolipoamide succinyltransferase) and E3 (dihydrolipoamide dehydrogenase); the complex contains multiple copies of the three enzymatic components (E1, E2 and E3). Requires thiamine diphosphate as cofactor.

The catalysed reaction is N(6)-[(R)-lipoyl]-L-lysyl-[protein] + 2-oxoglutarate + H(+) = N(6)-[(R)-S(8)-succinyldihydrolipoyl]-L-lysyl-[protein] + CO2. Its function is as follows. E1 component of the 2-oxoglutarate dehydrogenase (OGDH) complex which catalyzes the decarboxylation of 2-oxoglutarate, the first step in the conversion of 2-oxoglutarate to succinyl-CoA and CO(2). The sequence is that of 2-oxoglutarate dehydrogenase E1 component from Bacillus velezensis (strain DSM 23117 / BGSC 10A6 / LMG 26770 / FZB42) (Bacillus amyloliquefaciens subsp. plantarum).